We begin with the raw amino-acid sequence, 524 residues long: Germ cell-less protein-like 1 (524 aa).

Residues 1–37 (MGALSSRVLRPAGRTEQPEPTPGAGGAARRSDAGEDA) are disordered. The Nuclear localization signal motif lies at 47 to 53 (GRKRKRS). The disordered stretch occupies residues 63–83 (DSETDDDEDEGDEQQRLLNTP). S64 is subject to Phosphoserine. Residues 65 to 74 (ETDDDEDEGD) show a composition bias toward acidic residues. T66 carries the post-translational modification Phosphothreonine. The Nuclear localization signal motif lies at 83–89 (PRRKKLK). Positions 106–176 (SDIKICALGE…LYRDDVLIKP (71 aa)) constitute a BTB domain.

In terms of assembly, interacts with TMPO-Beta, TSG101 and TFDP2. Interacts with EMD. As to expression, ubiquitously expressed at low levels throughout development and in adult tissues.

The protein localises to the nucleus matrix. Possible function in spermatogenesis. Enhances the degradation of MDM2 and increases the amount of p53 probably by modulating the nucleocytoplasmic transport. This is Germ cell-less protein-like 1 (Gmcl1) from Mus musculus (Mouse).